Consider the following 358-residue polypeptide: MLFKEAQAFIENMYKECHYETQIINKRLHDIELEIKETGTYTHTEEELIYGAKMAWRNSNRCIGRLFWDSLNVIDARDVTDEASFLSSINYHIAQATNEGKLKPYITIYAPKDGPKIFNNQLIRYAGYDNCGDPAEKEVTRLANHLGWKGKGTNFDVLPLIYQLPNESVKYYEYPTSLIKEVPIEHDHYPKLRKLNLKWYAVPIISNMDLKIGGIVYPTAPFNGWYMVTEIGVRNFIDDYRYNLLEKVADAFEFDTLKNNSFNKDRALVELNYAVYHSFKKEGVSIVDHLTAAKQFELFERNEAQQGRQVTGKWSWLAPPLSPTLTSNYHHGYDNTVKDPNFFYKKKKSNANQCPFHH.

Residue Cys62 coordinates heme.

It belongs to the NOS family. Bacterial NOS oxygenase subfamily. In terms of assembly, homodimer. It depends on heme as a cofactor. (6S)-5,6,7,8-tetrahydrofolate is required as a cofactor.

It catalyses the reaction 3 reduced [flavodoxin] + 2 L-arginine + 4 O2 = 3 oxidized [flavodoxin] + 2 L-citrulline + 2 nitric oxide + 4 H2O + 5 H(+). Functionally, catalyzes the production of nitric oxide. The polypeptide is Nitric oxide synthase oxygenase (nos) (Staphylococcus aureus (strain MRSA252)).